The sequence spans 236 residues: MKMMDANEIISFIQNSKKSTPVKVYVKGDLEGIDFGASAKPFITGNTGVVFGEWAEIQAALEANKGKIEDYVIENDRRNSAIPTLDLKNIKARIEPGAIIRDQVEIGDNAVIMMGASINIGSVIGEGTMIDMNVVLGGRATVGKNCHIGAGSVLAGVIEPPSAKPVVIEDDVVIGANAVVLEGVTVGKGAVVAAGAIVVEDVEPYTVVAGTPAKKIKDIDEKTKGKTEIKQELRQL.

It belongs to the transferase hexapeptide repeat family. DapH subfamily.

It catalyses the reaction (S)-2,3,4,5-tetrahydrodipicolinate + acetyl-CoA + H2O = L-2-acetamido-6-oxoheptanedioate + CoA. It participates in amino-acid biosynthesis; L-lysine biosynthesis via DAP pathway; LL-2,6-diaminopimelate from (S)-tetrahydrodipicolinate (acetylase route): step 1/3. Its function is as follows. Catalyzes the transfer of an acetyl group from acetyl-CoA to tetrahydrodipicolinate. The protein is 2,3,4,5-tetrahydropyridine-2,6-dicarboxylate N-acetyltransferase of Bacillus licheniformis (strain ATCC 14580 / DSM 13 / JCM 2505 / CCUG 7422 / NBRC 12200 / NCIMB 9375 / NCTC 10341 / NRRL NRS-1264 / Gibson 46).